The sequence spans 475 residues: Aspartyl/glutamyl-tRNA(Asn/Gln) amidotransferase subunit B (475 aa).

The protein belongs to the GatB/GatE family. GatB subfamily. As to quaternary structure, heterotrimer of A, B and C subunits.

It carries out the reaction L-glutamyl-tRNA(Gln) + L-glutamine + ATP + H2O = L-glutaminyl-tRNA(Gln) + L-glutamate + ADP + phosphate + H(+). It catalyses the reaction L-aspartyl-tRNA(Asn) + L-glutamine + ATP + H2O = L-asparaginyl-tRNA(Asn) + L-glutamate + ADP + phosphate + 2 H(+). Its function is as follows. Allows the formation of correctly charged Asn-tRNA(Asn) or Gln-tRNA(Gln) through the transamidation of misacylated Asp-tRNA(Asn) or Glu-tRNA(Gln) in organisms which lack either or both of asparaginyl-tRNA or glutaminyl-tRNA synthetases. The reaction takes place in the presence of glutamine and ATP through an activated phospho-Asp-tRNA(Asn) or phospho-Glu-tRNA(Gln). The protein is Aspartyl/glutamyl-tRNA(Asn/Gln) amidotransferase subunit B of Chlorobium chlorochromatii (strain CaD3).